Reading from the N-terminus, the 964-residue chain is Syndetin (964 aa).

Met-1 carries the post-translational modification N-acetylmethionine. The tract at residues Met-1–Ala-25 is disordered. Residue Ser-15 is modified to Phosphoserine. Coiled coils occupy residues Leu-81 to Leu-107 and Tyr-216 to Ile-244. A phosphoserine mark is found at Ser-494, Ser-498, Ser-559, and Ser-561. Residues Asp-532 to Val-563 form a disordered region. Lys-963 participates in a covalent cross-link: Glycyl lysine isopeptide (Lys-Gly) (interchain with G-Cter in SUMO1); alternate. Lys-963 is covalently cross-linked (Glycyl lysine isopeptide (Lys-Gly) (interchain with G-Cter in SUMO2); alternate).

The protein belongs to the syndetin family. Component of the endosome-associated retrograde protein (EARP) complex, composed of VPS51, VPS52, VPS53 and VPS50/Syndetin. The EARP complex interacts with EIPR1. Interacts with VPS51 and VPS53 in an EIPR1-independent manner.

The protein resides in the recycling endosome. It is found in the membrane. Functionally, acts as a component of the EARP complex that is involved in endocytic recycling. The EARP complex associates with Rab4-positive endosomes and promotes recycling of internalized transferrin receptor (TFRC) to the plasma membrane. Within the EARP complex, required to tether the complex to recycling endosomes. Not involved in retrograde transport from early and late endosomes to the trans-Golgi network (TGN). The polypeptide is Syndetin (Mus musculus (Mouse)).